Reading from the N-terminus, the 834-residue chain is Glycerol-3-phosphate acyltransferase (834 aa).

Positions Cys309–Ile314 match the HXXXXD motif motif.

This sequence belongs to the GPAT/DAPAT family.

Its subcellular location is the cell inner membrane. It carries out the reaction sn-glycerol 3-phosphate + an acyl-CoA = a 1-acyl-sn-glycero-3-phosphate + CoA. Its pathway is phospholipid metabolism; CDP-diacylglycerol biosynthesis; CDP-diacylglycerol from sn-glycerol 3-phosphate: step 1/3. This Pseudomonas fluorescens (strain ATCC BAA-477 / NRRL B-23932 / Pf-5) protein is Glycerol-3-phosphate acyltransferase.